A 189-amino-acid chain; its full sequence is Protein GrpE (189 aa).

A disordered region spans residues M1 to D24. The segment covering Q10 to D24 has biased composition (low complexity).

Belongs to the GrpE family. As to quaternary structure, homodimer.

The protein localises to the cytoplasm. Its function is as follows. Participates actively in the response to hyperosmotic and heat shock by preventing the aggregation of stress-denatured proteins, in association with DnaK and GrpE. It is the nucleotide exchange factor for DnaK and may function as a thermosensor. Unfolded proteins bind initially to DnaJ; upon interaction with the DnaJ-bound protein, DnaK hydrolyzes its bound ATP, resulting in the formation of a stable complex. GrpE releases ADP from DnaK; ATP binding to DnaK triggers the release of the substrate protein, thus completing the reaction cycle. Several rounds of ATP-dependent interactions between DnaJ, DnaK and GrpE are required for fully efficient folding. The protein is Protein GrpE of Ectopseudomonas mendocina (strain ymp) (Pseudomonas mendocina).